A 298-amino-acid chain; its full sequence is Tyrosine recombinase XerC (298 aa).

Residues 1–84 enclose the Core-binding (CB) domain; the sequence is MNHIQEAFLN…TLRTFYEYWM (84 aa). The Tyr recombinase domain occupies 105–286; that stretch reads YLPQFFYEEE…SNQQLRKVYL (182 aa). Active-site residues include arginine 145, lysine 169, histidine 238, arginine 241, and histidine 264. The O-(3'-phospho-DNA)-tyrosine intermediate role is filled by tyrosine 273.

Belongs to the 'phage' integrase family. XerC subfamily. Forms a cyclic heterotetrameric complex composed of two molecules of XerC and two molecules of XerD.

It localises to the cytoplasm. Functionally, site-specific tyrosine recombinase, which acts by catalyzing the cutting and rejoining of the recombining DNA molecules. The XerC-XerD complex is essential to convert dimers of the bacterial chromosome into monomers to permit their segregation at cell division. It also contributes to the segregational stability of plasmids. This Staphylococcus aureus (strain MRSA252) protein is Tyrosine recombinase XerC.